We begin with the raw amino-acid sequence, 270 residues long: Phosphoribosylformylglycinamidine synthase subunit PurQ (270 aa).

The 247-residue stretch at 5 to 251 (ALVLHATGTN…VIRERDSEEE (247 aa)) folds into the Glutamine amidotransferase type-1 domain. Residue Cys-95 is the Nucleophile of the active site. Residues His-236 and Glu-238 contribute to the active site.

As to quaternary structure, part of the FGAM synthase complex composed of 1 PurL, 1 PurQ and 2 PurS subunits.

Its subcellular location is the cytoplasm. It catalyses the reaction N(2)-formyl-N(1)-(5-phospho-beta-D-ribosyl)glycinamide + L-glutamine + ATP + H2O = 2-formamido-N(1)-(5-O-phospho-beta-D-ribosyl)acetamidine + L-glutamate + ADP + phosphate + H(+). The catalysed reaction is L-glutamine + H2O = L-glutamate + NH4(+). It functions in the pathway purine metabolism; IMP biosynthesis via de novo pathway; 5-amino-1-(5-phospho-D-ribosyl)imidazole from N(2)-formyl-N(1)-(5-phospho-D-ribosyl)glycinamide: step 1/2. Functionally, part of the phosphoribosylformylglycinamidine synthase complex involved in the purines biosynthetic pathway. Catalyzes the ATP-dependent conversion of formylglycinamide ribonucleotide (FGAR) and glutamine to yield formylglycinamidine ribonucleotide (FGAM) and glutamate. The FGAM synthase complex is composed of three subunits. PurQ produces an ammonia molecule by converting glutamine to glutamate. PurL transfers the ammonia molecule to FGAR to form FGAM in an ATP-dependent manner. PurS interacts with PurQ and PurL and is thought to assist in the transfer of the ammonia molecule from PurQ to PurL. The polypeptide is Phosphoribosylformylglycinamidine synthase subunit PurQ (Treponema denticola (strain ATCC 35405 / DSM 14222 / CIP 103919 / JCM 8153 / KCTC 15104)).